Reading from the N-terminus, the 471-residue chain is Serine hydroxymethyltransferase 4 (471 aa).

At Met-1 the chain carries N-acetylmethionine. Ser-39 contributes to the L-serine binding site. Positions 39, 59, and 61 each coordinate pemetrexed. 2 residues coordinate L-serine: Glu-61 and Tyr-69. Residues 105 to 107, His-134, Ser-190, and His-218 contribute to the pemetrexed site; that span reads SGS. The L-serine site is built by His-218 and Lys-244. N6-(pyridoxal phosphate)lysine is present on Lys-244. Gly-290 serves as a coordination point for pemetrexed. Methotrexate is bound at residue Lys-373. Arg-389 contacts L-serine. Arg-389 provides a ligand contact to pemetrexed.

This sequence belongs to the SHMT family. Homotetramer. Interacts with UBP16. It depends on pyridoxal 5'-phosphate as a cofactor. In terms of tissue distribution, mostly expressed in flowers, less abundant in roots, inflorescence stems, and siliques, and barely detectable in leaves.

Its subcellular location is the cytoplasm. It catalyses the reaction (6R)-5,10-methylene-5,6,7,8-tetrahydrofolate + glycine + H2O = (6S)-5,6,7,8-tetrahydrofolate + L-serine. It functions in the pathway one-carbon metabolism; tetrahydrofolate interconversion. Its activity is regulated as follows. Inhibited by the antifolate drugs methotrexate and pemetrexed. Functionally, catalyzes the interconversion of serine and glycine with the conversion of tetrahydrofolate (THF) into 5,10-methylene-THF. This chain is Serine hydroxymethyltransferase 4, found in Arabidopsis thaliana (Mouse-ear cress).